Consider the following 466-residue polypeptide: Ribulose bisphosphate carboxylase large chain (466 aa).

Lys-5 is modified (N6,N6,N6-trimethyllysine). 2 residues coordinate substrate: Asn-114 and Thr-164. Catalysis depends on Lys-166, which acts as the Proton acceptor. Residue Lys-168 participates in substrate binding. Mg(2+) is bound by residues Lys-192, Asp-194, and Glu-195. At Lys-192 the chain carries N6-carboxylysine. His-285 serves as the catalytic Proton acceptor. The substrate site is built by Arg-286, His-318, and Ser-370.

Belongs to the RuBisCO large chain family. Type I subfamily. Heterohexadecamer of 8 large chains and 8 small chains; disulfide-linked. The disulfide link is formed within the large subunit homodimers. It depends on Mg(2+) as a cofactor. Post-translationally, the disulfide bond which can form in the large chain dimeric partners within the hexadecamer appears to be associated with oxidative stress and protein turnover.

The protein resides in the plastid. It localises to the chloroplast. The enzyme catalyses 2 (2R)-3-phosphoglycerate + 2 H(+) = D-ribulose 1,5-bisphosphate + CO2 + H2O. It carries out the reaction D-ribulose 1,5-bisphosphate + O2 = 2-phosphoglycolate + (2R)-3-phosphoglycerate + 2 H(+). Its function is as follows. RuBisCO catalyzes two reactions: the carboxylation of D-ribulose 1,5-bisphosphate, the primary event in carbon dioxide fixation, as well as the oxidative fragmentation of the pentose substrate in the photorespiration process. Both reactions occur simultaneously and in competition at the same active site. In Eremothamnus marlothianus, this protein is Ribulose bisphosphate carboxylase large chain.